We begin with the raw amino-acid sequence, 87 residues long: UPF0335 protein RL4065 (87 aa).

Belongs to the UPF0335 family.

The polypeptide is UPF0335 protein RL4065 (Rhizobium johnstonii (strain DSM 114642 / LMG 32736 / 3841) (Rhizobium leguminosarum bv. viciae)).